Reading from the N-terminus, the 562-residue chain is Long-chain-fatty-acid--CoA ligase (562 aa).

213–224 (YTGGTTGVAKGA) lines the ATP pocket.

Belongs to the ATP-dependent AMP-binding enzyme family. Mg(2+) is required as a cofactor.

It localises to the membrane. It catalyses the reaction a long-chain fatty acid + ATP + CoA = a long-chain fatty acyl-CoA + AMP + diphosphate. It participates in lipid metabolism; fatty acid beta-oxidation. Its function is as follows. Catalyzes the esterification, concomitant with transport, of exogenous long-chain fatty acids into metabolically active CoA thioesters for subsequent degradation or incorporation into phospholipids. The polypeptide is Long-chain-fatty-acid--CoA ligase (fadD) (Yersinia pestis).